Reading from the N-terminus, the 105-residue chain is MQRIKQGDDVIVTAGKDKGRRGTVVKVLTDDRVVVQNINMVKKHQKPNPTAGQPGGIIDKEMPIHVSNVMLFNPAKGKGDRVGFKTLEDGRKVRYFKSDNEVVDA.

The protein belongs to the universal ribosomal protein uL24 family. Part of the 50S ribosomal subunit.

In terms of biological role, one of two assembly initiator proteins, it binds directly to the 5'-end of the 23S rRNA, where it nucleates assembly of the 50S subunit. Functionally, one of the proteins that surrounds the polypeptide exit tunnel on the outside of the subunit. This is Large ribosomal subunit protein uL24 from Thioalkalivibrio sulfidiphilus (strain HL-EbGR7).